Here is a 105-residue protein sequence, read N- to C-terminus: Large ribosomal subunit protein bL21c (105 aa).

It belongs to the bacterial ribosomal protein bL21 family. Part of the 50S ribosomal subunit.

The protein localises to the plastid. It is found in the chloroplast. This protein binds to 23S rRNA. The protein is Large ribosomal subunit protein bL21c of Phaeodactylum tricornutum (strain CCAP 1055/1).